Here is a 266-residue protein sequence, read N- to C-terminus: Elongator complex protein 6 (266 aa).

The protein belongs to the ELP6 family. Component of the elongator complex which consists of ELP1, ELP2, ELP3, ELP4, ELP5 and ELP6.

Its subcellular location is the cytoplasm. It is found in the nucleus. The protein operates within tRNA modification; 5-methoxycarbonylmethyl-2-thiouridine-tRNA biosynthesis. Component of the elongator complex which is required for multiple tRNA modifications, including mcm5U (5-methoxycarbonylmethyl uridine), mcm5s2U (5-methoxycarbonylmethyl-2-thiouridine), and ncm5U (5-carbamoylmethyl uridine). The elongator complex catalyzes formation of carboxymethyluridine in the wobble base at position 34 in tRNAs. Involved in cell migration. The chain is Elongator complex protein 6 from Homo sapiens (Human).